Here is a 577-residue protein sequence, read N- to C-terminus: Arginine--tRNA ligase (577 aa).

The 'HIGH' region signature appears at 122–132; it reads PNVAKEMHVGH.

It belongs to the class-I aminoacyl-tRNA synthetase family. Monomer.

The protein localises to the cytoplasm. It catalyses the reaction tRNA(Arg) + L-arginine + ATP = L-arginyl-tRNA(Arg) + AMP + diphosphate. This is Arginine--tRNA ligase from Haemophilus influenzae (strain PittEE).